The primary structure comprises 257 residues: Type III pantothenate kinase (257 aa).

Position 6-13 (6-13) interacts with ATP; the sequence is DAGNTNIV. Residues Tyr100 and 107–110 contribute to the substrate site; that span reads GADR. Asp109 serves as the catalytic Proton acceptor. Asp129 contacts K(+). Position 132 (Thr132) interacts with ATP. Thr184 provides a ligand contact to substrate.

It belongs to the type III pantothenate kinase family. In terms of assembly, homodimer. NH4(+) is required as a cofactor. The cofactor is K(+).

It localises to the cytoplasm. It carries out the reaction (R)-pantothenate + ATP = (R)-4'-phosphopantothenate + ADP + H(+). It participates in cofactor biosynthesis; coenzyme A biosynthesis; CoA from (R)-pantothenate: step 1/5. Its function is as follows. Catalyzes the phosphorylation of pantothenate (Pan), the first step in CoA biosynthesis. The chain is Type III pantothenate kinase from Clostridium botulinum (strain Alaska E43 / Type E3).